The sequence spans 60 residues: uncharacterized protein (60 aa).

This is an uncharacterized protein from Schizosaccharomyces pombe (strain 972 / ATCC 24843) (Fission yeast).